The following is a 76-amino-acid chain: Acyl carrier protein (76 aa).

The Carrier domain occupies 1-76 (MSVEEKVKKI…DAIDYIAGKQ (76 aa)). Position 36 is an O-(pantetheine 4'-phosphoryl)serine (Ser36).

Belongs to the acyl carrier protein (ACP) family. In terms of processing, 4'-phosphopantetheine is transferred from CoA to a specific serine of apo-ACP by AcpS. This modification is essential for activity because fatty acids are bound in thioester linkage to the sulfhydryl of the prosthetic group.

It is found in the cytoplasm. Its pathway is lipid metabolism; fatty acid biosynthesis. In terms of biological role, carrier of the growing fatty acid chain in fatty acid biosynthesis. The polypeptide is Acyl carrier protein (Oleidesulfovibrio alaskensis (strain ATCC BAA-1058 / DSM 17464 / G20) (Desulfovibrio alaskensis)).